The following is a 27-amino-acid chain: Vasotocin-neurophysin VT (27 aa).

A disulfide bond links Cys-1 and Cys-6. Position 9 is a glycine amide (Gly-9).

It belongs to the vasopressin/oxytocin family.

Vasotocin is an antidiuretic hormone. In Sclerophrys regularis (Common African toad), this protein is Vasotocin-neurophysin VT.